We begin with the raw amino-acid sequence, 429 residues long: Enolase (429 aa).

Gln-162 provides a ligand contact to (2R)-2-phosphoglycerate. Catalysis depends on Glu-204, which acts as the Proton donor. Residues Asp-241, Glu-283, and Asp-310 each contribute to the Mg(2+) site. The (2R)-2-phosphoglycerate site is built by Lys-335, Arg-364, Ser-365, and Lys-386. Lys-335 serves as the catalytic Proton acceptor.

The protein belongs to the enolase family. Mg(2+) is required as a cofactor.

It localises to the cytoplasm. The protein resides in the secreted. Its subcellular location is the cell surface. It catalyses the reaction (2R)-2-phosphoglycerate = phosphoenolpyruvate + H2O. Its pathway is carbohydrate degradation; glycolysis; pyruvate from D-glyceraldehyde 3-phosphate: step 4/5. In terms of biological role, catalyzes the reversible conversion of 2-phosphoglycerate (2-PG) into phosphoenolpyruvate (PEP). It is essential for the degradation of carbohydrates via glycolysis. The polypeptide is Enolase (Mycobacterium bovis (strain BCG / Pasteur 1173P2)).